The primary structure comprises 287 residues: Bifunctional protein FolD (287 aa).

NADP(+)-binding positions include 166–168 (GAS) and I232.

It belongs to the tetrahydrofolate dehydrogenase/cyclohydrolase family. In terms of assembly, homodimer.

It catalyses the reaction (6R)-5,10-methylene-5,6,7,8-tetrahydrofolate + NADP(+) = (6R)-5,10-methenyltetrahydrofolate + NADPH. The enzyme catalyses (6R)-5,10-methenyltetrahydrofolate + H2O = (6R)-10-formyltetrahydrofolate + H(+). The protein operates within one-carbon metabolism; tetrahydrofolate interconversion. Functionally, catalyzes the oxidation of 5,10-methylenetetrahydrofolate to 5,10-methenyltetrahydrofolate and then the hydrolysis of 5,10-methenyltetrahydrofolate to 10-formyltetrahydrofolate. The polypeptide is Bifunctional protein FolD (Aeromonas salmonicida (strain A449)).